The primary structure comprises 395 residues: MNPEFLPASGASRTVSIGDVVTEAGVTIFDAELRYFAFYDSPDGAADYAEFSAGPEPGLSPEERPIVLIEHALTGDGNAADWWADMVGPNKPIDTTRYLVLCANVLGGCQGSTGPSSPHPDGQAWGSRFPGLSIRDMVTAERQLLERVGVTKIHALIGASMGGARVLEWSLMHPEMINAALPIAVSARASAWQIGLQSSQIRFIEADPAWHGGDYYDTGEVPSHGLGQARRIAHLTYRGELEVDERFGVDPQNGENPYGPYRDPHQRFAVESYLDRQAEKLVARFDAGSYVVLTDALNRHDVGRSRGGMNAALGSCEVPTMVVGVDTDILYPLHQQEHLSRNLGDFIGMSKITSPTGHDGFLIESRQMGQALAKFLAKAEIIAEGTEGAEGTARA.

Positions 65–363 (PIVLIEHALT…SPTGHDGFLI (299 aa)) constitute an AB hydrolase-1 domain. Catalysis depends on Ser-160, which acts as the Nucleophile. Arg-230 provides a ligand contact to substrate. Active-site residues include Asp-328 and His-358. Asp-359 is a substrate binding site.

Belongs to the AB hydrolase superfamily. MetX family. In terms of assembly, homodimer.

It is found in the cytoplasm. The catalysed reaction is L-homoserine + acetyl-CoA = O-acetyl-L-homoserine + CoA. It functions in the pathway amino-acid biosynthesis; L-methionine biosynthesis via de novo pathway; O-acetyl-L-homoserine from L-homoserine: step 1/1. Transfers an acetyl group from acetyl-CoA to L-homoserine, forming acetyl-L-homoserine. In Corynebacterium jeikeium (strain K411), this protein is Homoserine O-acetyltransferase.